Reading from the N-terminus, the 322-residue chain is Phosphoenolpyruvate transferase (322 aa).

Residue D58 coordinates 7,8-didemethyl-8-hydroxy-5-deazariboflavin.

It belongs to the CofD family. In terms of assembly, homodimer. Mg(2+) serves as cofactor.

The catalysed reaction is enolpyruvoyl-2-diphospho-5'-guanosine + 7,8-didemethyl-8-hydroxy-5-deazariboflavin = dehydro coenzyme F420-0 + GMP + H(+). It functions in the pathway cofactor biosynthesis; coenzyme F420 biosynthesis. Functionally, catalyzes the transfer of the phosphoenolpyruvate moiety from enoylpyruvoyl-2-diphospho-5'-guanosine (EPPG) to 7,8-didemethyl-8-hydroxy-5-deazariboflavin (FO) with the formation of dehydro coenzyme F420-0 and GMP. This is Phosphoenolpyruvate transferase from Thermobifida fusca (strain YX).